The following is a 139-amino-acid chain: Transcription antitermination protein NusB (139 aa).

It belongs to the NusB family.

Its function is as follows. Involved in transcription antitermination. Required for transcription of ribosomal RNA (rRNA) genes. Binds specifically to the boxA antiterminator sequence of the ribosomal RNA (rrn) operons. In Rubrobacter xylanophilus (strain DSM 9941 / JCM 11954 / NBRC 16129 / PRD-1), this protein is Transcription antitermination protein NusB.